A 435-amino-acid chain; its full sequence is MLQCAPKKNERLRGSCDFCTQSKLRCNKNKPSCRRCTIQQQPCVYSVARRTGRPPKRPRKANDGQEANEQHGDQDPVTSTPGGSCQQQSNHLLDVEGDGANFTLADASTTAQDRETAACTALDNALLMGGTFGFSSLLDDPLIQSDDFLSFSLCMPPGEEEGHMASPCSPPILPSIDVPHLPARFGFLESSVESGLHGRNGPHLIEQPDKTVPSSFSEMEKIYDEGLTFSGLDSAINAVTNNGKGEPSIPGTMAAHPHSKRQCFCSTSMSKLQMLVSHPTLCQKNSRARFDMTLFLEEVVFSIYRDVLQCLVCQSKSLHSLASLCICTDWVIEALRDVAQDLSSGQDNLGGFRAGLCPPKDKFSICVGRFVLDDQLRESCTRSLVRYRLRKLIPIMDTMMKLNYRGAGGALSQAIRTMVEDVRHKIESALGMMEL.

A DNA-binding region (zn(2)-C6 fungal-type) is located at residues 16–43; that stretch reads CDFCTQSKLRCNKNKPSCRRCTIQQQPC. Residues 48–89 are disordered; sequence ARRTGRPPKRPRKANDGQEANEQHGDQDPVTSTPGGSCQQQS. A compositionally biased stretch (basic residues) spans 50-59; it reads RTGRPPKRPR. Positions 60 to 74 are enriched in basic and acidic residues; sequence KANDGQEANEQHGDQ. Residues 76–89 are compositionally biased toward polar residues; the sequence is PVTSTPGGSCQQQS.

The protein localises to the nucleus. Transcription factor that regulates the expression of the gene clusters that mediate the biosynthesis of the host-selective toxins (HSTs) ACT-toxins responsible for brown spot of tangerine disease by the tangerine pathotype which affects tangerines and mandarins. ACT-toxins consist of three moieties, 9,10-epoxy-8-hydroxy-9-methyl-decatrienoic acid (EDA), valine and a polyketide. ACT-toxin I is toxic to both citrus and pear; toxin II the 5''-deoxy derivative of ACT-toxin I, is highly toxic to pear and slightly toxic to citrus. On cellular level, ACT-toxins affect plasma membrane of susceptible cells and cause a sudden increase in loss of K(+) after a few minutes of toxin treatment. In Alternaria alternata (Alternaria rot fungus), this protein is Transcription activator ACTTR.